The following is a 120-amino-acid chain: UPF0102 protein PTH_1707 (120 aa).

Belongs to the UPF0102 family.

The sequence is that of UPF0102 protein PTH_1707 from Pelotomaculum thermopropionicum (strain DSM 13744 / JCM 10971 / SI).